The sequence spans 270 residues: A-type potassium channel modulatory protein KCNIP2 (270 aa).

Over residues 1-17 the composition is skewed to basic and acidic residues; it reads MRGQGRKESLSESRDLD. The disordered stretch occupies residues 1–34; sequence MRGQGRKESLSESRDLDGSYDQLTGHPPGPSKKA. S9 bears the Phosphoserine mark. S-palmitoyl cysteine attachment occurs at residues C45 and C46. The EF-hand 1; degenerate domain maps to 81–137; sequence FELSTVCHRPEGLEQLQEQTKFTRRELQVLYRGFKNECPSGIVNEENFKQIYSQFFP. EF-hand domains are found at residues 140-175, 176-211, and 224-259; these read DSSN…ILRG, TIDD…IYDM, and APRE…DENI. The Ca(2+) site is built by D153, N155, D157, S159, D164, D189, N191, D193, C195, E200, D237, N239, D241, and E248. Positions 257–270 are interaction with KCND2; the sequence is ENIMRSMQLFDNVI.

This sequence belongs to the recoverin family. As to quaternary structure, component of heteromultimeric potassium channels. Identified in potassium channel complexes containing KCND1, KCND2, KCND3, KCNIP1, KCNIP2, KCNIP3, KCNIP4, DPP6 and DPP10. The KCND2-KCNIP2 channel complex contains four KCND2 and four KCNIP2 subunits. Interacts with KCND2. Probably part of a complex consisting of KCNIP1, KCNIP2 isoform 3 and KCND2. At least isoform 2 and isoform 3 can self-associate to form homodimers and homotetramers. Isoform 3 interacts with KCNIP1 in a calcium-dependent manner. Interacts with KCND3; each KCNIP2 monomer interacts with two adjacent KCND3 subunits, through both the N-terminal inactivation ball of a KCND3 subunit and a C-terminal helix from the adjacent KCND3 subunit, clamping them together; this interaction modulates the channel gating kinetics. Palmitoylated. Palmitoylation enhances association with the plasma membrane. In terms of tissue distribution, expressed in heart, brain and lung. In brain, abundantly expressed in striatum, hippocampus and olfactory bulb, moderately expressed in cerebral cortex and lowly expressed in thalamus and hypothalamus. Isoform 1 is predominant in cerebral cortex, striatum and hippocampus. Isoform 1, isoform 2 and isoform 3 are equally expressed in olfactory bulb. Iisoform 3 is expressed at high levels and isoform 1 at low levels in heart (in PubMed:11263977).

Its subcellular location is the cell membrane. In terms of biological role, regulatory subunit of Kv4/D (Shal)-type voltage-gated rapidly inactivating A-type potassium channels. Modulates channel density, inactivation kinetics and rate of recovery from inactivation in a calcium-dependent and isoform-specific manner. Involved in KCND2 and KCND3 trafficking to the cell surface. Essential for the expression of I(To) currents in the heart. Required for normal protein levels of KCND2 in the heart ventricle. The chain is A-type potassium channel modulatory protein KCNIP2 from Rattus norvegicus (Rat).